The following is a 387-amino-acid chain: Exodeoxyribonuclease 7 large subunit (387 aa).

It belongs to the XseA family. As to quaternary structure, heterooligomer composed of large and small subunits.

It is found in the cytoplasm. The enzyme catalyses Exonucleolytic cleavage in either 5'- to 3'- or 3'- to 5'-direction to yield nucleoside 5'-phosphates.. Functionally, bidirectionally degrades single-stranded DNA into large acid-insoluble oligonucleotides, which are then degraded further into small acid-soluble oligonucleotides. In Campylobacter jejuni subsp. jejuni serotype O:2 (strain ATCC 700819 / NCTC 11168), this protein is Exodeoxyribonuclease 7 large subunit.